Consider the following 471-residue polypeptide: Lincomycin resistance protein LmrB (471 aa).

12 consecutive transmembrane segments (helical) span residues 13–35 (PIPI…TALN), 55–77 (LTTG…LQWF), 84–106 (FTAV…FAML), 111–133 (VVQA…LIFP), 140–162 (AMGM…SGLI), 167–189 (TWNW…GMKF), 201–223 (IDIL…FSSA), 227–249 (GWGS…LFVW), 269–291 (FTLG…ILLP), 329–351 (AYGP…FFLT), 358–380 (SALT…MMPA), and 445–467 (GIQN…SLFI).

Belongs to the major facilitator superfamily. EmrB family.

The protein localises to the cell membrane. Functionally, proton-dependent transporter. May mediate the efflux of lincomycin. The protein is Lincomycin resistance protein LmrB (lmrB) of Listeria monocytogenes serovar 1/2a (strain ATCC BAA-679 / EGD-e).